The following is a 901-amino-acid chain: HTH-type transcriptional regulator MalT (901 aa).

39–46 (SPAGYGKT) serves as a coordination point for ATP. The 66-residue stretch at 829 to 894 (ELIRTSPLTQ…AAVQHAQKLL (66 aa)) folds into the HTH luxR-type domain. The H-T-H motif DNA-binding region spans 853-872 (NEQIAGELEVAATTIKTHIR).

The protein belongs to the MalT family. As to quaternary structure, monomer in solution. Oligomerizes to an active state in the presence of the positive effectors ATP and maltotriose.

Activated by ATP and maltotriose, which are both required for DNA binding. Functionally, positively regulates the transcription of the maltose regulon whose gene products are responsible for uptake and catabolism of malto-oligosaccharides. Specifically binds to the promoter region of its target genes, recognizing a short DNA motif called the MalT box. This Escherichia coli O127:H6 (strain E2348/69 / EPEC) protein is HTH-type transcriptional regulator MalT.